A 470-amino-acid chain; its full sequence is MDLNFKELAEAKKDAILKDLEELIAIDSSEDLENATEEYPVGKGPVDAMTKFLSFAKRDGFDTENFANYAGRVNFGAGDKRLGIIGHMDVVPAGEGWTRDPFKMEIDEEGRIYGRGSADDKGPSLTAYYGMLLLKEAGFKPKKKIDFVLGTNEETNWVGIDYYLKHEPTPDIVFSPDAEYPIINGEQGIFTLEFSFKNDDTKGDYVLDKFKAGIATNVTPQVTRATISGPDLEAVKLAYESFLADKELDGSFEINDESADIVLIGQGAHASAPQVGKNSATFLALFLDQYAFAGRDKNFLHFLAEVEHEDFYGKKLGIFHHDDLMGDLASSPSMFDYEHAGKASLLNNVRYPQGTDPDTMIKQVLDKFSGILDVTYNGFEEPHYVPGSDPMVQTLLKVYEKQTGKPGHEVVIGGGTYGRLFERGVAFGAQPENGPMVMHAANEFMMLDDLILSIAIYAEAIYELTKDEEL.

Position 87 (His87) interacts with Zn(2+). Asp89 is an active-site residue. Asp119 contributes to the Zn(2+) binding site. Residue Glu153 is the Proton acceptor of the active site. Glu154 and Asp177 together coordinate Zn(2+). Arg350 serves as a coordination point for substrate. His439 is a Zn(2+) binding site.

It belongs to the peptidase M20A family. Zn(2+) is required as a cofactor.

The protein resides in the cytoplasm. Its activity is regulated as follows. Fully inhibited by 1,10-phenanthroline or EDTA. Functionally, is a relatively unspecific dipeptidase cleaving a variety of dipeptides, notably those with an N-terminal beta-Ala or D-Ala residue, e.g. carnosine (beta-Ala-His). To a lesser extent, also shows aminopeptidase activity, since it is able to catalyze the removal of the N-terminal amino acid from a few distinct tripeptides. This is Beta-Ala-Xaa dipeptidase (pepV) from Lactobacillus delbrueckii subsp. lactis.